Consider the following 272-residue polypeptide: 3',5'-cyclic adenosine monophosphate phosphodiesterase CpdA (272 aa).

Residues aspartate 21, histidine 23, aspartate 63, asparagine 93, histidine 161, histidine 200, and histidine 202 each contribute to the Fe cation site. AMP-binding positions include histidine 23, aspartate 63, and 93 to 94; that span reads NH. Histidine 202 provides a ligand contact to AMP.

Belongs to the cyclic nucleotide phosphodiesterase class-III family. As to quaternary structure, monomer. A divalent metal cation serves as cofactor.

It carries out the reaction 3',5'-cyclic AMP + H2O = AMP + H(+). Activated by iron. Other divalent metal ions have no effect. Its function is as follows. Hydrolyzes cAMP to 5'-AMP. Plays an important regulatory role in modulating the intracellular concentration of cAMP, thereby influencing cAMP-dependent processes. Specifically required for regulation of virulence factors. Can also hydrolyze cGMP, but cGMP is unlikely to be synthesized by P.aeruginosa and cAMP is probably the biologically relevant substrate for CpdA in vivo. This Pseudomonas aeruginosa protein is 3',5'-cyclic adenosine monophosphate phosphodiesterase CpdA.